A 116-amino-acid polypeptide reads, in one-letter code: Venom nerve growth factor (116 aa).

3 disulfide bridges follow: C14/C78, C56/C106, and C66/C108.

The protein belongs to the NGF-beta family. In terms of assembly, homodimer; non-covalently linked. In terms of processing, not glycosylated. As to expression, expressed by the venom gland.

The protein resides in the secreted. Functionally, nerve growth factor is important for the development and maintenance of the sympathetic and sensory nervous systems. It stimulates division and differentiation of sympathetic and embryonic sensory neurons as well as basal forebrain cholinergic neurons in the brain. Its relevance in the snake venom is not clear. However, it has been shown to inhibit metalloproteinase-dependent proteolysis of platelet glycoprotein Ib alpha, suggesting a metalloproteinase inhibition to prevent metalloprotease autodigestion and/or protection against prey proteases. Binds a lipid between the two protein chains in the homodimer. The lipid-bound form promotes histamine relase from mouse mast cells, contrary to the lipid-free form. The protein is Venom nerve growth factor of Naja naja (Indian cobra).